A 248-amino-acid polypeptide reads, in one-letter code: PF03932 family protein CutC (248 aa).

The protein belongs to the CutC family. In terms of assembly, homodimer.

The protein localises to the cytoplasm. The sequence is that of PF03932 family protein CutC from Escherichia coli O139:H28 (strain E24377A / ETEC).